A 147-amino-acid polypeptide reads, in one-letter code: Hemoglobin subunit gamma (147 aa).

The Globin domain occupies 3 to 147 (YFTAEEKAAI…VASALARKYH (145 aa)). The heme b site is built by H64 and H93.

This sequence belongs to the globin family. As to quaternary structure, heterotetramer of two alpha chains and two gamma chains in fetal hemoglobin (Hb F). Red blood cells.

Gamma chains make up the fetal hemoglobin F, in combination with alpha chains. This Dugong dugon (Dugong) protein is Hemoglobin subunit gamma (HBG).